The sequence spans 175 residues: Ribosome maturation factor RimM (175 aa).

A PRC barrel domain is found at 95–175 (SEDEFYWREL…RIEVDWDPGF (81 aa)).

This sequence belongs to the RimM family. As to quaternary structure, binds ribosomal protein uS19.

It is found in the cytoplasm. Its function is as follows. An accessory protein needed during the final step in the assembly of 30S ribosomal subunit, possibly for assembly of the head region. Essential for efficient processing of 16S rRNA. May be needed both before and after RbfA during the maturation of 16S rRNA. It has affinity for free ribosomal 30S subunits but not for 70S ribosomes. In Aliivibrio salmonicida (strain LFI1238) (Vibrio salmonicida (strain LFI1238)), this protein is Ribosome maturation factor RimM.